Consider the following 146-residue polypeptide: Large ribosomal subunit protein uL15 (146 aa).

Residues 1-13 show a composition bias toward basic and acidic residues; sequence MKLHELYPAEGSR. Residues 1–55 are disordered; that stretch reads MKLHELYPAEGSRKVRNRVGRGAATGNGKTSGRGQKGQKARSGGKVRPGFEGGQL. Positions 23-35 are enriched in gly residues; the sequence is AATGNGKTSGRGQ.

Belongs to the universal ribosomal protein uL15 family. As to quaternary structure, part of the 50S ribosomal subunit.

Functionally, binds to the 23S rRNA. In Staphylococcus carnosus (strain TM300), this protein is Large ribosomal subunit protein uL15.